The primary structure comprises 89 residues: Small ribosomal subunit protein bS16 (89 aa).

This sequence belongs to the bacterial ribosomal protein bS16 family.

The protein is Small ribosomal subunit protein bS16 of Psychrobacter arcticus (strain DSM 17307 / VKM B-2377 / 273-4).